Consider the following 295-residue polypeptide: Pyridoxal 5'-phosphate synthase subunit PdxS (295 aa).

D25 contributes to the D-ribose 5-phosphate binding site. K82 serves as the catalytic Schiff-base intermediate with D-ribose 5-phosphate. Position 154 (G154) interacts with D-ribose 5-phosphate. R166 is a D-glyceraldehyde 3-phosphate binding site. Residues G215 and 236–237 each bind D-ribose 5-phosphate; that span reads GS.

The protein belongs to the PdxS/SNZ family. In terms of assembly, in the presence of PdxT, forms a dodecamer of heterodimers.

It catalyses the reaction aldehydo-D-ribose 5-phosphate + D-glyceraldehyde 3-phosphate + L-glutamine = pyridoxal 5'-phosphate + L-glutamate + phosphate + 3 H2O + H(+). The protein operates within cofactor biosynthesis; pyridoxal 5'-phosphate biosynthesis. Functionally, catalyzes the formation of pyridoxal 5'-phosphate from ribose 5-phosphate (RBP), glyceraldehyde 3-phosphate (G3P) and ammonia. The ammonia is provided by the PdxT subunit. Can also use ribulose 5-phosphate and dihydroxyacetone phosphate as substrates, resulting from enzyme-catalyzed isomerization of RBP and G3P, respectively. The protein is Pyridoxal 5'-phosphate synthase subunit PdxS of Staphylococcus aureus (strain Mu3 / ATCC 700698).